The following is a 62-amino-acid chain: Large ribosomal subunit protein bL28 (62 aa).

It belongs to the bacterial ribosomal protein bL28 family.

The sequence is that of Large ribosomal subunit protein bL28 from Thermobifida fusca (strain YX).